The primary structure comprises 683 residues: Methionine--tRNA ligase (683 aa).

Residues 15 to 25 carry the 'HIGH' region motif; it reads PYANGPIHLGH. The Zn(2+) site is built by cysteine 146, cysteine 149, cysteine 159, and cysteine 162. Residues 332–336 carry the 'KMSKS' region motif; it reads KMSKS. Residue lysine 335 participates in ATP binding. The 102-residue stretch at 582–683 folds into the tRNA-binding domain; it reads DFAKIDLRIA…EGALPGMRVK (102 aa).

This sequence belongs to the class-I aminoacyl-tRNA synthetase family. MetG type 1 subfamily. As to quaternary structure, homodimer. The cofactor is Zn(2+).

The protein resides in the cytoplasm. The catalysed reaction is tRNA(Met) + L-methionine + ATP = L-methionyl-tRNA(Met) + AMP + diphosphate. Its function is as follows. Is required not only for elongation of protein synthesis but also for the initiation of all mRNA translation through initiator tRNA(fMet) aminoacylation. This Shewanella frigidimarina (strain NCIMB 400) protein is Methionine--tRNA ligase.